A 374-amino-acid polypeptide reads, in one-letter code: Putative cullin-like protein 2 (374 aa).

It belongs to the cullin family.

The chain is Putative cullin-like protein 2 from Arabidopsis thaliana (Mouse-ear cress).